A 352-amino-acid chain; its full sequence is Histidine biosynthesis bifunctional protein HisB (352 aa).

Residues 1 to 164 are histidinol-phosphatase; the sequence is MSQKILFIDR…EIENEILSSF (164 aa). Aspartate 9 acts as the Nucleophile in catalysis. Mg(2+) contacts are provided by aspartate 9 and aspartate 11. Aspartate 11 (proton donor) is an active-site residue. Positions 93, 95, 101, and 103 each coordinate Zn(2+). Position 130 (aspartate 130) interacts with Mg(2+). The segment at 165-352 is imidazoleglycerol-phosphate dehydratase; that stretch reads RSASYQRTTK…ENLASSKGVI (188 aa).

In the N-terminal section; belongs to the histidinol-phosphatase family. This sequence in the C-terminal section; belongs to the imidazoleglycerol-phosphate dehydratase family. The cofactor is Mg(2+). Zn(2+) serves as cofactor.

The protein localises to the cytoplasm. It carries out the reaction D-erythro-1-(imidazol-4-yl)glycerol 3-phosphate = 3-(imidazol-4-yl)-2-oxopropyl phosphate + H2O. It catalyses the reaction L-histidinol phosphate + H2O = L-histidinol + phosphate. It functions in the pathway amino-acid biosynthesis; L-histidine biosynthesis; L-histidine from 5-phospho-alpha-D-ribose 1-diphosphate: step 6/9. Its pathway is amino-acid biosynthesis; L-histidine biosynthesis; L-histidine from 5-phospho-alpha-D-ribose 1-diphosphate: step 8/9. This is Histidine biosynthesis bifunctional protein HisB from Campylobacter jejuni subsp. jejuni serotype O:6 (strain 81116 / NCTC 11828).